Reading from the N-terminus, the 106-residue chain is ATP synthase-coupling factor 6, mitochondrial (106 aa).

This sequence belongs to the eukaryotic ATPase subunit F6 family. F-type ATPases have 2 components, CF(1) - the catalytic core - and CF(0) - the membrane proton channel. CF(0) seems to have nine subunits: a, b, c, d, e, f, g, F6 and 8 (or A6L).

It localises to the mitochondrion. Its subcellular location is the mitochondrion inner membrane. Mitochondrial membrane ATP synthase (F(1)F(0) ATP synthase or Complex V) produces ATP from ADP in the presence of a proton gradient across the membrane which is generated by electron transport complexes of the respiratory chain. F-type ATPases consist of two structural domains, F(1) - containing the extramembraneous catalytic core and F(0) - containing the membrane proton channel, linked together by a central stalk and a peripheral stalk. During catalysis, ATP synthesis in the catalytic domain of F(1) is coupled via a rotary mechanism of the central stalk subunits to proton translocation. Part of the complex F(0) domain and the peripheric stalk, which acts as a stator to hold the catalytic alpha(3)beta(3) subcomplex and subunit a/ATP6 static relative to the rotary elements. The chain is ATP synthase-coupling factor 6, mitochondrial from Drosophila melanogaster (Fruit fly).